A 181-amino-acid chain; its full sequence is ATP synthase subunit delta (181 aa).

It belongs to the ATPase delta chain family. As to quaternary structure, F-type ATPases have 2 components, F(1) - the catalytic core - and F(0) - the membrane proton channel. F(1) has five subunits: alpha(3), beta(3), gamma(1), delta(1), epsilon(1). F(0) has three main subunits: a(1), b(2) and c(10-14). The alpha and beta chains form an alternating ring which encloses part of the gamma chain. F(1) is attached to F(0) by a central stalk formed by the gamma and epsilon chains, while a peripheral stalk is formed by the delta and b chains.

The protein localises to the cell inner membrane. Its function is as follows. F(1)F(0) ATP synthase produces ATP from ADP in the presence of a proton or sodium gradient. F-type ATPases consist of two structural domains, F(1) containing the extramembraneous catalytic core and F(0) containing the membrane proton channel, linked together by a central stalk and a peripheral stalk. During catalysis, ATP synthesis in the catalytic domain of F(1) is coupled via a rotary mechanism of the central stalk subunits to proton translocation. This protein is part of the stalk that links CF(0) to CF(1). It either transmits conformational changes from CF(0) to CF(1) or is implicated in proton conduction. This is ATP synthase subunit delta from Protochlamydia amoebophila (strain UWE25).